A 286-amino-acid chain; its full sequence is B3 domain-containing protein REM20 (286 aa).

Residues 9 to 102 (PRFFKVFLVE…TFEVSVFDRW (94 aa)) constitute a DNA-binding region (TF-B3). The segment at 117–161 (SDSDSDSVVEDEKDSTDVVEDDDDEDEDEDEDDDGSFDEDEEISQ) is disordered. Acidic residues predominate over residues 119–159 (SDSDSVVEDEKDSTDVVEDDDDEDEDEDEDDDGSFDEDEEI).

Its subcellular location is the nucleus. This is B3 domain-containing protein REM20 (REM20) from Arabidopsis thaliana (Mouse-ear cress).